We begin with the raw amino-acid sequence, 1135 residues long: Peroxisomal ATPase PEX6 (1135 aa).

853–860 (GPPGTGKT) is a binding site for ATP.

The protein belongs to the AAA ATPase family. As to quaternary structure, interacts with PEX1; forming the PEX1-PEX6 AAA ATPase complex, which is composed of a heterohexamer formed by a trimer of PEX1-PEX6 dimers.

It localises to the cytoplasm. The protein resides in the cytosol. Its subcellular location is the peroxisome membrane. It carries out the reaction ATP + H2O = ADP + phosphate + H(+). In terms of biological role, component of the PEX1-PEX6 AAA ATPase complex, a protein dislocase complex that mediates the ATP-dependent extraction of the PEX5 receptor from peroxisomal membranes, an essential step for PEX5 recycling. Specifically recognizes PEX5 monoubiquitinated at 'Cys-6', and pulls it out of the peroxisome lumen through the PEX2-PEX10-PEX12 retrotranslocation channel. Extraction by the PEX1-PEX6 AAA ATPase complex is accompanied by unfolding of the TPR repeats and release of bound cargo from PEX5. The polypeptide is Peroxisomal ATPase PEX6 (PEX6) (Pichia angusta (Yeast)).